The sequence spans 263 residues: Putative methyltransferase DDB_G0268948 (263 aa).

It belongs to the methyltransferase superfamily.

The protein is Putative methyltransferase DDB_G0268948 of Dictyostelium discoideum (Social amoeba).